A 246-amino-acid polypeptide reads, in one-letter code: 4-hydroxy-tetrahydrodipicolinate reductase (246 aa).

7–12 (GCSGRM) is an NAD(+) binding site. Residue R34 coordinates NADP(+). NAD(+) is bound by residues 76–78 (ATT) and 102–105 (CPNT). The Proton donor/acceptor role is filled by H135. Residue H136 coordinates (S)-2,3,4,5-tetrahydrodipicolinate. K139 (proton donor) is an active-site residue. 145–146 (GT) provides a ligand contact to (S)-2,3,4,5-tetrahydrodipicolinate.

It belongs to the DapB family.

The protein localises to the cytoplasm. The catalysed reaction is (S)-2,3,4,5-tetrahydrodipicolinate + NAD(+) + H2O = (2S,4S)-4-hydroxy-2,3,4,5-tetrahydrodipicolinate + NADH + H(+). It catalyses the reaction (S)-2,3,4,5-tetrahydrodipicolinate + NADP(+) + H2O = (2S,4S)-4-hydroxy-2,3,4,5-tetrahydrodipicolinate + NADPH + H(+). The protein operates within amino-acid biosynthesis; L-lysine biosynthesis via DAP pathway; (S)-tetrahydrodipicolinate from L-aspartate: step 4/4. Functionally, catalyzes the conversion of 4-hydroxy-tetrahydrodipicolinate (HTPA) to tetrahydrodipicolinate. The polypeptide is 4-hydroxy-tetrahydrodipicolinate reductase (Chlamydia abortus (strain DSM 27085 / S26/3) (Chlamydophila abortus)).